The following is a 215-amino-acid chain: Adenylate kinase (215 aa).

10-15 is a binding site for ATP; that stretch reads GAGKGT. An NMP region spans residues 30–59; sequence STGDILRENVKNETELGKKAKEYMDKGLLV. Residues threonine 31, arginine 36, 57–59, 85–88, and glutamine 92 contribute to the AMP site; these read LLV and GFPR. The LID stretch occupies residues 126–163; that stretch reads GRRICKNCGASFHVIYRPPQKEGVCDVCGGELYQREDD. Arginine 127 lines the ATP pocket. Residues cysteine 130 and cysteine 133 each coordinate Zn(2+). 136–137 lines the ATP pocket; that stretch reads SF. Residues cysteine 150 and cysteine 153 each coordinate Zn(2+). AMP is bound by residues arginine 160 and arginine 171. Residue glutamine 198 coordinates ATP.

This sequence belongs to the adenylate kinase family. As to quaternary structure, monomer.

It is found in the cytoplasm. It carries out the reaction AMP + ATP = 2 ADP. Its pathway is purine metabolism; AMP biosynthesis via salvage pathway; AMP from ADP: step 1/1. In terms of biological role, catalyzes the reversible transfer of the terminal phosphate group between ATP and AMP. Plays an important role in cellular energy homeostasis and in adenine nucleotide metabolism. The polypeptide is Adenylate kinase (Caldicellulosiruptor bescii (strain ATCC BAA-1888 / DSM 6725 / KCTC 15123 / Z-1320) (Anaerocellum thermophilum)).